A 189-amino-acid polypeptide reads, in one-letter code: Tumor protein p53-inducible protein 11 (189 aa).

Over 1–63 (MAAKQPPPLM…FAVREPLGLR (63 aa)) the chain is Cytoplasmic. A Phosphoserine modification is found at serine 14. Residues 64–84 (VWQFLSAMLFSSVAIMALALP) traverse the membrane as a helical segment. Topologically, residues 85–108 (DQLYDAVFDGAEVTSKTPIRLYGG) are extracellular. A helical transmembrane segment spans residues 109-129 (ALLSISLIMWNALYTAEKVII). Arginine 130 is a topological domain (cytoplasmic). A helical membrane pass occupies residues 131 to 151 (WTLLTEACYFGVQSLVVTATL). The Extracellular segment spans residues 152–155 (AETG). A helical membrane pass occupies residues 156 to 176 (LMSLGTLLLLASRLLFVIVSI). Residues 177 to 189 (YYYYQVGRKPKKV) lie on the Cytoplasmic side of the membrane.

It is found in the membrane. The chain is Tumor protein p53-inducible protein 11 (Tp53i11) from Rattus norvegicus (Rat).